We begin with the raw amino-acid sequence, 136 residues long: Small ribosomal subunit protein uS11c (136 aa).

The protein belongs to the universal ribosomal protein uS11 family. In terms of assembly, part of the 30S ribosomal subunit.

It localises to the plastid. The polypeptide is Small ribosomal subunit protein uS11c (Epifagus virginiana (Beechdrops)).